Here is a 195-residue protein sequence, read N- to C-terminus: Large ribosomal subunit protein uL5 (195 aa).

It belongs to the universal ribosomal protein uL5 family. In terms of assembly, part of the 50S ribosomal subunit; part of the 5S rRNA/L5/L18/L25 subcomplex. Contacts the 5S rRNA and the P site tRNA. Forms a bridge to the 30S subunit in the 70S ribosome.

Its function is as follows. This is one of the proteins that bind and probably mediate the attachment of the 5S RNA into the large ribosomal subunit, where it forms part of the central protuberance. In the 70S ribosome it contacts protein S13 of the 30S subunit (bridge B1b), connecting the 2 subunits; this bridge is implicated in subunit movement. Contacts the P site tRNA; the 5S rRNA and some of its associated proteins might help stabilize positioning of ribosome-bound tRNAs. This is Large ribosomal subunit protein uL5 from Chlorobium phaeobacteroides (strain DSM 266 / SMG 266 / 2430).